We begin with the raw amino-acid sequence, 137 residues long: Small ribosomal subunit protein uS12 (137 aa).

Residues 33–57 (KVQTNVSSPQKRGVATRVGTMTPKK) form a disordered region. Position 102 is a 3-methylthioaspartic acid (aspartate 102).

The protein belongs to the universal ribosomal protein uS12 family. As to quaternary structure, part of the 30S ribosomal subunit. Contacts proteins S8 and S17. May interact with IF1 in the 30S initiation complex.

Functionally, with S4 and S5 plays an important role in translational accuracy. Its function is as follows. Interacts with and stabilizes bases of the 16S rRNA that are involved in tRNA selection in the A site and with the mRNA backbone. Located at the interface of the 30S and 50S subunits, it traverses the body of the 30S subunit contacting proteins on the other side and probably holding the rRNA structure together. The combined cluster of proteins S8, S12 and S17 appears to hold together the shoulder and platform of the 30S subunit. The chain is Small ribosomal subunit protein uS12 from Streptococcus thermophilus (strain CNRZ 1066).